Here is a 366-residue protein sequence, read N- to C-terminus: Chorismate synthase (366 aa).

Positions 48 and 54 each coordinate NADP(+). FMN contacts are provided by residues 125–127 (RSS), 238–239 (NA), Gly278, 293–297 (KPTSS), and Arg319.

Belongs to the chorismate synthase family. As to quaternary structure, homotetramer. FMNH2 is required as a cofactor.

The enzyme catalyses 5-O-(1-carboxyvinyl)-3-phosphoshikimate = chorismate + phosphate. It participates in metabolic intermediate biosynthesis; chorismate biosynthesis; chorismate from D-erythrose 4-phosphate and phosphoenolpyruvate: step 7/7. Its function is as follows. Catalyzes the anti-1,4-elimination of the C-3 phosphate and the C-6 proR hydrogen from 5-enolpyruvylshikimate-3-phosphate (EPSP) to yield chorismate, which is the branch point compound that serves as the starting substrate for the three terminal pathways of aromatic amino acid biosynthesis. This reaction introduces a second double bond into the aromatic ring system. The sequence is that of Chorismate synthase from Chromobacterium violaceum (strain ATCC 12472 / DSM 30191 / JCM 1249 / CCUG 213 / NBRC 12614 / NCIMB 9131 / NCTC 9757 / MK).